The primary structure comprises 76 residues: Alpha-amylase inhibitor Z-2685 (76 aa).

2 disulfides stabilise this stretch: Cys-9-Cys-25 and Cys-43-Cys-70.

Its function is as follows. Inhibits mammalian alpha-amylases specifically but has no action on plant and microbial alpha-amylases. In Streptomyces rochei (Streptomyces parvullus), this protein is Alpha-amylase inhibitor Z-2685.